A 132-amino-acid polypeptide reads, in one-letter code: Homeobox protein ceh-1 (132 aa).

A DNA-binding region (homeobox) is located at residues 1–60 (MRRARTAFTYEQLVALENKFKTSRYLSVVERLNLAIQLQLSETQVKIWFQNRRTKWKKHN). A disordered region spans residues 56 to 80 (WKKHNPGQDANTPQTPPSSDETQIQ). A compositionally biased stretch (polar residues) spans 63 to 80 (QDANTPQTPPSSDETQIQ).

It localises to the nucleus. The polypeptide is Homeobox protein ceh-1 (ceh-1) (Caenorhabditis elegans).